We begin with the raw amino-acid sequence, 269 residues long: Regulatory protein RecX (269 aa).

It belongs to the RecX family.

The protein resides in the cytoplasm. Modulates RecA activity. In Lactococcus lactis subsp. cremoris (strain SK11), this protein is Regulatory protein RecX.